Here is a 394-residue protein sequence, read N- to C-terminus: Actin-related protein 2-A (394 aa).

Residues 160–162 (GDG), 214–218 (RMMKE), and 305–310 (GGSTMY) contribute to the ATP site.

The protein belongs to the actin family. ARP2 subfamily. Component of the Arp2/3 complex composed of actr2/arp2, actr3/arp3, arpc1b, arpc2, arpc3, arpc4 and arpc5.

It is found in the cytoplasm. It localises to the cytoskeleton. The protein localises to the cell projection. The protein resides in the nucleus. ATP-binding component of the Arp2/3 complex, a multiprotein complex that mediates actin polymerization upon stimulation by nucleation-promoting factor (NPF). The Arp2/3 complex mediates the formation of branched actin networks in the cytoplasm, providing the force for cell motility. Seems to contact the pointed end of the daughter actin filament. In addition to its role in the cytoplasmic cytoskeleton, the Arp2/3 complex also promotes actin polymerization in the nucleus, thereby regulating gene transcription and repair of damaged DNA. The Arp2/3 complex promotes homologous recombination (HR) repair in response to DNA damage by promoting nuclear actin polymerization, leading to drive motility of double-strand breaks (DSBs). The polypeptide is Actin-related protein 2-A (actr2a) (Danio rerio (Zebrafish)).